We begin with the raw amino-acid sequence, 120 residues long: Large ribosomal subunit protein uL18 (120 aa).

Belongs to the universal ribosomal protein uL18 family. In terms of assembly, part of the 50S ribosomal subunit; part of the 5S rRNA/L5/L18/L25 subcomplex. Contacts the 5S and 23S rRNAs.

Functionally, this is one of the proteins that bind and probably mediate the attachment of the 5S RNA into the large ribosomal subunit, where it forms part of the central protuberance. In Rhodopseudomonas palustris (strain BisB5), this protein is Large ribosomal subunit protein uL18.